The following is a 219-amino-acid chain: MPVVTLTGIPGYTGLRIEIDMVCLFDWLLAGCSSKHDYTNPPWNAKVPVQRAMQWMPISQKAGAAWGVDPQLITAIIAIESGGNPNAVSKSNAIGLMQLKASTSGRDVYRRMGWSGEPTTSELKNPERNISMGAAYLNILETGPLAGIEDPKVLQYALVVSYANGAGALLRTFSSDRKKAISKINDLDADEFLDHVARNHPAPQAPRYIYKLEQALDAM.

This sequence belongs to the transglycosylase Slt family.

The catalysed reaction is Endolytic cleavage of the (1-&gt;4)-beta-glycosidic linkage between N-acetylmuramic acid (MurNAc) and N-acetylglucosamine (GlcNAc) residues in peptidoglycan with concomitant formation of a 1,6-anhydrobond in the MurNAc residue.. In terms of biological role, murein-degrading enzyme. May play a role in recycling of muropeptides during cell elongation and/or cell division (Potential). The protein is Endo-type membrane-bound lytic murein transglycosylase A-like protein of Shigella flexneri.